Consider the following 490-residue polypeptide: MLMTAEQYIESLRKLNTRVYMFGEKIENWVDHPMIRPSINCVAMTYELAQDPQYADLMTTKSNLIGKTINRFANLHQSTDDLRKKVKMQRLLGQKTASCFQRCVGMDAFNAVFSTTYEIDQKYGTNYHKNFTEYLKYIQENDLIVDGAMTDPKGDRGLAPSAQKDPDLFLRIVEKREDGIVVRGAKAHQTGSINSHEHIIMPTIAMTEADKDYAVSFACPSDADGLFMIYGRQSCDTRKMEEGADIDLGNKQFGGQEALVVFDNVFIPNDRIFLCQEYDFAGMMVERFAGYHRQSYGGCKVGVGDVVIGAAALAADYNGAQKASHVKDKLIEMTHLNETLYCCGIACSAEGYPTAAGNYQIDLLLANVCKQNITRFPYEIVRLAEDIAGGLMVTMPSEADFKSETVVGRDGETIGDFCNKFFAAAPTCTTEERMRVLRFLENICLGASAVGYRTESMHGAGSPQAQRIMIARQGNINAKKELAKAIAGIK.

[4Fe-4S] cluster contacts are provided by Cys99 and Cys103. FAD-binding positions include 149-156 and 188-190; these read MTDPKGDR and HQT. [4Fe-4S] cluster-binding residues include His292 and Cys299. FAD contacts are provided by residues His325 and 386 to 390; that span reads DIAGG.

As to quaternary structure, homotetramer. FAD serves as cofactor. Requires [4Fe-4S] cluster as cofactor.

It catalyses the reaction 4-hydroxybutanoyl-CoA = (2E)-butenoyl-CoA + H2O. The enzyme catalyses vinylacetyl-CoA = (2E)-butenoyl-CoA. Catalyzes the reversible conversion of 4-hydroxybutyryl-CoA to crotonyl-CoA. The mechanism of the reaction seems to go through three steps: (1) the FAD-dependent oxidation of 4-hydroxybutyryl-CoA to 4-hydroxycrotonyl-CoA; (2) the hydroxyl group is substituted by a hydride derived from the now reduced FAD in an SN2' reaction leading to vinylacetyl-CoA; (3) isomerization to yield crotonyl-CoA. The chain is 4-hydroxybutyryl-CoA dehydratase/vinylacetyl-CoA-Delta-isomerase (abfD) from Clostridium aminobutyricum.